A 1391-amino-acid chain; its full sequence is MKRGFARPTPEKPPVIKPENIVLSTPLSIPPPEGKPWWLIVVGVVVVGLLGGMVAMVFASGSHVFGGIGSIFPLFMMVGIMMMMFRGMGGGQQQMSRPKLDAMRAQFMLMLDMLRETAQESADSMDANYRWFHPAPNTLAAAVGSPRMWERKPDGKDLNFGVVRVGVGMTRPEVTWGEPQNMPTDIELEPVTGKALQEFGRYQSVVYNLPKMVSLLVEPWYALVGEREQVLGLMRAIICQLAFSHGPDHVQMIVVSSDLDQWDWVKWLPHFGDSRRHDAAGNARMVYTSVREFAAEQAELFAGRGSFTPRHASSSAQTPTPHTVIIADVDDPQWEYVISAEGVDGVTFFDLTGSSMWTDIPERKLQFDKTGVIEALPRDRDTWMVIDDKAWFFALTDQVSIAEAEEFAQKLAQWRLAEAYEEIGQRVAHIGARDILSYYGIDDPGNIDFDSLWASRTDTMGRSRLRAPFGNRSDNGELLFLDMKSLDEGGDGPHGVMSGTTGSGKSTLVRTVIESLMLSHPPEELQFVLADLKGGSAVKPFAGVPHVSRIITDLEEDQALMERFLDALWGEIARRKAICDSAGVDDAKEYNSVRARMRARGQDMAPLPMLVVVIDEFYEWFRIMPTAVDVLDSIGRQGRAYWIHLMMASQTIESRAEKLMENMGYRLVLKARTAGAAQAAGVPNAVNLPAQAGLGYFRKSLEDIIRFQAEFLWRDYFQPGVSIDGEEAPALVHSIDYIRPQLFTNSFTPLEVSVGGPDIEPVVAQPNGEVLESDDIEGGEDEDEEGVRTPKVGTVIIDQLRKIKFEPYRLWQPPLTQPVAIDDLVNRFLGRPWHKEYGSACNLVFPIGIIDRPYKHDQPPWTVDTSGPGANVLILGAGGSGKTTALQTLICSAALTHTPQQVQFYCLAYSSTALTTVSRIPHVGEVAGPTDPYGVRRTVAELLALVRERKRSFLECGIASMEMFRRRKFGGEAGPVPDDGFGDVYLVIDNYRALAEENEVLIEQVNVIINQGPSFGVHVVVTADRESELRPPVRSGFGSRIELRLAAVEDAKLVRSRFAKDVPVKPGRGMVAVNYVRLDSDPQAGLHTLVARPALGSTPDNVFECDSVVAAVSRLTSAQAPPVRRLPARFGVEQVRELASRDTRQGVGAGGIAWAISELDLAPVYLNFAENSHLMVTGRRECGRTTTLATIMSEIGRLYAPGASSAPPPAPGRPSAQVWLVDPRRQLLTALGSDYVERFAYNLDGVVAMMGELAAALAGREPPPGLSAEELLSRSWWSGPEIFLIVDDIQQLPPGFDSPLHKAVPFVNRAADVGLHVIVTRTFGGWSSAGSDPMLRALHQANAPLLVMDADPDEGFIRGKMKGGPLPRGRGLLMAEDTGVFVQVAATEVRR.

A run of 2 helical transmembrane segments spans residues 38–58 (WLIV…AMVF) and 65–85 (FGGI…MMMF). FtsK domains are found at residues 476-678 (GELL…GAAQ), 858-1052 (QPPW…EDAK), and 1161-1354 (LAPV…DPDE). ATP-binding positions include 499 to 506 (GTTGSGKS), 876 to 883 (GAGGSGKT), and 1178 to 1185 (GRRECGRT).

Part of the ESX-5 / type VII secretion system (T7SS), which is composed of cytosolic and membrane components. The ESX-5 membrane complex is composed of EccB5, EccC5, EccD5 and EccE5.

It is found in the cell inner membrane. Its function is as follows. Part of the ESX-5 specialized secretion system, which is responsible for the secretion of EsxN and a number of PE_PGRS and PPE proteins, including PPE41. This Mycobacterium tuberculosis (strain CDC 1551 / Oshkosh) protein is ESX-5 secretion system protein EccC5.